Here is a 439-residue protein sequence, read N- to C-terminus: COBRA-like protein 7 (439 aa).

The N-terminal stretch at Met1–Ala22 is a signal peptide. Asn138, Asn181, Asn186, Asn232, Asn312, and Asn346 each carry an N-linked (GlcNAc...) asparagine glycan. Asn412 carries the GPI-anchor amidated asparagine lipid modification. Positions Gly413–Met439 are cleaved as a propeptide — removed in mature form.

Belongs to the COBRA family.

Its subcellular location is the cell membrane. Functionally, involved in determining the orientation of cell expansion, probably by playing an important role in cellulose deposition. May act by recruiting cellulose synthesizing complexes to discrete positions on the cell surface. The polypeptide is COBRA-like protein 7 (BC1LP1) (Oryza sativa subsp. japonica (Rice)).